The primary structure comprises 2148 residues: Polyketide synthase 1 (2148 aa).

The N-terminal acylcarrier protein transacylase domain (SAT) stretch occupies residues 19–261 (FIFGDQSSCN…TPLAVHAPYH (243 aa)). The region spanning 394-829 (ESKIAIIGMS…GGNTALLVED (436 aa)) is the Ketosynthase family 3 (KS3) domain. Active-site for beta-ketoacyl synthase activity residues include C566, H701, and H745. The malonyl-CoA:ACP transacylase (MAT) domain stretch occupies residues 929–1233 (AFVFSGQGSQ…PSLMRNKDGW (305 aa)). S1018 serves as the catalytic For acyl/malonyl transferase activity. Residues 1310-1624 (TASVHRIVHE…RKVLNTAMPP (315 aa)) are product template (PT) domain. Residues 1314-1447 (HRIVHESVEK…SSLHFEQPKV (134 aa)) form an N-terminal hotdog fold region. The region spanning 1314-1619 (HRIVHESVEK…FQGIPRKVLN (306 aa)) is the PKS/mFAS DH domain. The active-site Proton acceptor; for dehydratase activity is the H1346. Residues 1474 to 1619 (LNSRMSSGVI…FQGIPRKVLN (146 aa)) are C-terminal hotdog fold. Catalysis depends on D1533, which acts as the Proton donor; for dehydratase activity. Residues 1619-1655 (NTAMPPPKSQNEAPVRSGPAKPAAKPPRSASSEHSGH) are disordered. The segment covering 1634–1650 (RSGPAKPAAKPPRSASS) has biased composition (low complexity). Residues 1678–1752 (RNPMLPVFKI…DLAAHLGLDT (75 aa)) form the Carrier 1 domain. At S1712 the chain carries O-(pantetheine 4'-phosphoryl)serine. Composition is skewed to low complexity over residues 1757-1769 (QSSG…GGLS) and 1779-1796 (TSSV…SVSG). The disordered stretch occupies residues 1757–1796 (QSSGQSSSFGGLSPRSDSIGEITSSVTTPPSLSPRSSVSG). Positions 1793 to 1870 (SVSGSQCKDV…SFKHMFQQGH (78 aa)) constitute a Carrier 2 domain. S1830 is modified (O-(pantetheine 4'-phosphoryl)serine). Residues 1882–2146 (LKQYRATSTL…ERVAAFIRST (265 aa)) form a thioesterase (TE) domain region. The active-site For thioesterase activity is S1973.

Functionally, polyketide synthase; part of the Pks1 gene cluster that mediates the biosynthesis of an anthraquinone derivative pigment that contributes to conidial pigmentation that provides protection from UV radiation, heat and cold stress. The polyketide synthase Pks1 produces 1-acetyl-2,4,6,8-tetrahydroxy-9,10-anthraquinone though condensation of acetyl-CoA with malonyl-CoA. The dehydratase EthD and the laccase Mlac1 further convert the anthraquinone derivative into the final conidial pigment. In Metarhizium anisopliae (strain ARSEF 549), this protein is Polyketide synthase 1.